Consider the following 653-residue polypeptide: Endoglin (653 aa).

The signal sequence occupies residues 1-26 (MDRGVLPLPITLLFVIYSFVPTTGLA). Positions 27–47 (ERVGCDLQPVDPTRGEVTFTT) are OR1, N-terminal part. The required for interaction with GDF2 stretch occupies residues 27-337 (ERVGCDLQPV…SSCGGVFQTT (311 aa)). The Extracellular segment spans residues 27–581 (ERVGCDLQPV…IVSPDLSGKG (555 aa)). 7 cysteine pairs are disulfide-bonded: C31/C209, C54/C184, C244/C330, C350/C382, C363/C442, C394/C412, and C493/C549. Positions 48 to 201 (SQVSEGCVAQ…MGATLEWQPR (154 aa)) are OR2. N-linked (GlcNAc...) asparagine glycans are attached at residues N89, N135, and N266. Positions 202–330 (AQTPVQSCRL…SNVSLRASSC (129 aa)) are OR1, C-terminal part. Residues 270-282 (QILTTGEYSVKIF) form an essential for interaction with GDF2 region. N-linked (GlcNAc...) asparagine glycosylation is found at N307 and N322. In terms of domain architecture, ZP spans 363–510 (CGNQVMTLAL…GDMVELIQSR (148 aa)). A helical transmembrane segment spans residues 582–606 (LVLPSVLGITFGAFLIGALLTAALW). Topologically, residues 607–653 (YIYSHTRGPSKREPVVAVAAPASSESSSTNHSIGSTQSTPCSTSSMA) are cytoplasmic. Positions 624–634 (VAAPASSESSS) are enriched in low complexity. Residues 624-653 (VAAPASSESSSTNHSIGSTQSTPCSTSSMA) form a disordered region. A compositionally biased stretch (polar residues) spans 635–653 (TNHSIGSTQSTPCSTSSMA). Phosphoserine; by TGFBR1 occurs at positions 641 and 644.

Homodimer; disulfide-linked. Forms a heteromeric complex with the signaling receptors for transforming growth factor-beta: TGFBR1 and/or TGFBR2. Interacts with TGFB1. It is able to bind TGFB1 and TGFB2 with high affinity, but not TGFB3. Interacts with GDF2, forming a heterotetramer with a 2:2 stoichiometry. Interacts with ACVRL1. Can form a heteromeric complex with GDF2 and ACVRL1. Interacts with BMP10. Interacts with DYNLT4. Interacts with ARRB2. Detected on blood vessels (at protein level). Detected on adult pulmonary artery, capillaries supporting the heart muscle and lung alveolar capillary endothelial cells. Endoglin is restricted to endothelial cells in all tissues except bone marrow and is also found in stromal cells within the connective tissue of intestine, stomach, heart, skeletal muscle, uterus, ovary, oviduct, testis and thymus.

The protein resides in the cell membrane. Its function is as follows. Vascular endothelium glycoprotein that plays an important role in the regulation of angiogenesis. Required for normal structure and integrity of adult vasculature. Regulates the migration of vascular endothelial cells. Required for normal extraembryonic angiogenesis and for embryonic heart development. May regulate endothelial cell shape changes in response to blood flow, which drive vascular remodeling and establishment of normal vascular morphology during angiogenesis. May play a role in the binding of endothelial cells to integrins. Acts as a TGF-beta coreceptor and is involved in the TGF-beta/BMP signaling cascade that ultimately leads to the activation of SMAD transcription factors. Required for GDF2/BMP9 signaling through SMAD1 in endothelial cells and modulates TGFB1 signaling through SMAD3. The chain is Endoglin (Eng) from Mus musculus (Mouse).